The chain runs to 511 residues: Bifunctional purine biosynthesis protein PurH (511 aa).

One can recognise an MGS-like domain in the interval 1 to 145; it reads MKKRALVSVS…KNHKFVSVIV (145 aa).

The protein belongs to the PurH family.

The catalysed reaction is (6R)-10-formyltetrahydrofolate + 5-amino-1-(5-phospho-beta-D-ribosyl)imidazole-4-carboxamide = 5-formamido-1-(5-phospho-D-ribosyl)imidazole-4-carboxamide + (6S)-5,6,7,8-tetrahydrofolate. It carries out the reaction IMP + H2O = 5-formamido-1-(5-phospho-D-ribosyl)imidazole-4-carboxamide. The protein operates within purine metabolism; IMP biosynthesis via de novo pathway; 5-formamido-1-(5-phospho-D-ribosyl)imidazole-4-carboxamide from 5-amino-1-(5-phospho-D-ribosyl)imidazole-4-carboxamide (10-formyl THF route): step 1/1. It functions in the pathway purine metabolism; IMP biosynthesis via de novo pathway; IMP from 5-formamido-1-(5-phospho-D-ribosyl)imidazole-4-carboxamide: step 1/1. The chain is Bifunctional purine biosynthesis protein PurH from Bacillus cereus (strain ATCC 14579 / DSM 31 / CCUG 7414 / JCM 2152 / NBRC 15305 / NCIMB 9373 / NCTC 2599 / NRRL B-3711).